Here is a 260-residue protein sequence, read N- to C-terminus: MDYYSLKMRASQHVGEGENSHEQHISGAERIVGRDSVEAVCAAMVRRAMNHSKGDPDFINVKIEKVHESDIQVLKSLPVTRVDVETWQEGLEKAFGLITPLMALRQAQGPCDGAKKFKEKLQDLLRETFPMRGAMLYDIATGNRLEPDKDRGVRATYMDALHSSEVDGCKNHFNEAIVLATKVANAPGMVAEFCVSDDPNYVTGYVASKELGYVRIMKMKEMGDENGGRIFLFDSRKASAEECIEYLQKKKVLVDVVGRT.

It belongs to the BioW family. In terms of assembly, homodimer. Mg(2+) serves as cofactor.

It carries out the reaction heptanedioate + ATP + CoA = 6-carboxyhexanoyl-CoA + AMP + diphosphate. The protein operates within metabolic intermediate metabolism; pimeloyl-CoA biosynthesis; pimeloyl-CoA from pimelate: step 1/1. Catalyzes the transformation of pimelate into pimeloyl-CoA with concomitant hydrolysis of ATP to AMP. The chain is 6-carboxyhexanoate--CoA ligase from Fibrobacter succinogenes (strain ATCC 19169 / S85).